A 180-amino-acid polypeptide reads, in one-letter code: ADP-ribosylation factor-like protein 1 (180 aa).

Residue G2 is the site of N-myristoyl glycine attachment. Residues 23–30 (GLDGAGKT), 66–70 (DLGGQ), and 125–128 (NKQD) contribute to the GTP site.

Belongs to the small GTPase superfamily. Arf family. In terms of tissue distribution, expressed in neuronal cells. Expression in hypodermal tissues is absent.

It is found in the golgi apparatus. Its subcellular location is the cytoplasm. The protein resides in the cytoplasmic granule. In terms of biological role, GTP-binding protein that may be involved in protein trafficking; may modulate vesicle budding and uncoating within the Golgi apparatus. Plays a role in male tail tip morphogenesis. The protein is ADP-ribosylation factor-like protein 1 of Caenorhabditis elegans.